A 426-amino-acid chain; its full sequence is Enolase (426 aa).

Gln-163 serves as a coordination point for (2R)-2-phosphoglycerate. Glu-205 (proton donor) is an active-site residue. Residues Asp-242, Glu-285, and Asp-312 each contribute to the Mg(2+) site. 4 residues coordinate (2R)-2-phosphoglycerate: Lys-337, Arg-366, Ser-367, and Lys-388. The active-site Proton acceptor is the Lys-337.

The protein belongs to the enolase family. It depends on Mg(2+) as a cofactor.

It localises to the cytoplasm. Its subcellular location is the secreted. It is found in the cell surface. It catalyses the reaction (2R)-2-phosphoglycerate = phosphoenolpyruvate + H2O. It participates in carbohydrate degradation; glycolysis; pyruvate from D-glyceraldehyde 3-phosphate: step 4/5. In terms of biological role, catalyzes the reversible conversion of 2-phosphoglycerate (2-PG) into phosphoenolpyruvate (PEP). It is essential for the degradation of carbohydrates via glycolysis. This chain is Enolase, found in Nitrobacter winogradskyi (strain ATCC 25391 / DSM 10237 / CIP 104748 / NCIMB 11846 / Nb-255).